Consider the following 1070-residue polypeptide: MTLQTNQTEKFTLPDLGKIQLQNFYNFLTKIIYKELKAFPKIYDSEHNFEFKIYPEEFFLVEPILNERESIYKSITYSTELYVTAELNCIKNQTKQKQKVLLGHIPLITSNGSFIINGISRAVVSQILRSPGIYFGSQLDSNSKCIYTATIISESGSRLKLEIDDRKLIWARISKKRKVSAIVLLLSMGIKLSDITRSIEHPAILDNILKKKNVLSNQKDAILEIYKQLFSAGGDPNFSDNILSELQRTFFQQRCEIGLIGRSNLNKKLGLNIPDEEIFLLPEDILATINYLIKLSLGIGSLDDIDHLKNRRVKSISDFLSEQLKNALNKIENTIEQSIKNISKRKRILTPKSLINSGILLAFFKDFFGSHPLSQFLDQTNSLTELVHKRRISSLGPGGLTRRTASFHVRDIHPSHYGRICPIETSEGMNAGLVASLASNATINTMGFIESPFYQLNDSSLFDKPIFLSAREDENFRIALGNRLAIDQEIQEKQITPARYKQEFINTPWSLANLRSIFPWQYFSIGASLIPFLEHDDANRALMGSNMQRQAVPLLITERPIVGTGFEANIARDSGAPLISNIDGKIQYLDSEFIEILGVDKKTYKLKLSNYQRSNNNTCIHHRAIVQLNQWVRKGQILADGATTIRGELSLGRNILVAYMPWEGYNFEDAVLISDRLIYDDLYTSIHIQKYELEIKINHQGQDKITKDIPHIDKYFLRHLDENGLVTLGSWVEAGDVLIGKLSSQEREDSLKVPEGKLLQAIFGLQIGNSRDTSLKLPAGGEGRVIDIQWIFQDEGGIDSNNFVNVYVLQKRRIQVGDKIAGRHGNKGIVSQILSRHDMPYLQNGTSIDMVLSPLGVPSRMNVGQILECLLGFAGKFLNKNYRITPFDERYEREASRKLVLSELHKAKKLTGYPWLLEPENAGKSRLFDGRTGETFNQPVTVGSAYILKLIHQVDDKIHARSTGPYSLVTQQPVRGRSRGGGQRVGEMEVWALEGFGAAYILQEMLTVKSDHIHSRYDVLGAIVTGTTIKTPTTTPESFRLLARELRCLGIQINDIEIYHETLQKKEIEI.

This sequence belongs to the RNA polymerase beta chain family. In plastids the minimal PEP RNA polymerase catalytic core is composed of four subunits: alpha, beta, beta', and beta''. When a (nuclear-encoded) sigma factor is associated with the core the holoenzyme is formed, which can initiate transcription.

It localises to the plastid. The protein resides in the chloroplast. It catalyses the reaction RNA(n) + a ribonucleoside 5'-triphosphate = RNA(n+1) + diphosphate. In terms of biological role, DNA-dependent RNA polymerase catalyzes the transcription of DNA into RNA using the four ribonucleoside triphosphates as substrates. The protein is DNA-directed RNA polymerase subunit beta of Chaetosphaeridium globosum (Charophycean green alga).